The following is a 330-amino-acid chain: MAPEENAGTELLLQSFERRFLAARTLRSFPWQSLEAKLRDSSDSELLRDILHKTVKHPVCVKHPPSVKYARCFLSELIKKHEAVHTEPLDELYEALAETLMAKESTQGHRSYLLPSGGSVTLSESTAIISYGTTGLVTWDAALYLAEWAIENPAVFTNRTVLELGSGAGLTGLAICKMCRPRAYIFSDCHSRVLEQLRGNVLLNGLSLEADITAKLDSPRVTVAQLDWDVATVHQLSAFQPDVVIAADVLYCPEAIMSLVGVLRRLAACREHQRAPEVYVAFTVRNPETCQLFTTELGRAGIRWEVEPRHEQKLFPYEEHLEMAMLNLTL.

Methionine 1 is subject to N-acetylmethionine. Residues tryptophan 139, 165 to 167, tryptophan 228, and alanine 247 each bind S-adenosyl-L-methionine; that span reads GSG.

It belongs to the class I-like SAM-binding methyltransferase superfamily. EEF2KMT family. As to quaternary structure, interacts with FAM86B2 and FAM86C1P.

The protein resides in the cytoplasm. The enzyme catalyses L-lysyl-[protein] + 3 S-adenosyl-L-methionine = N(6),N(6),N(6)-trimethyl-L-lysyl-[protein] + 3 S-adenosyl-L-homocysteine + 3 H(+). In terms of biological role, catalyzes the trimethylation of eukaryotic elongation factor 2 (EEF2) on 'Lys-525'. This Homo sapiens (Human) protein is Protein-lysine N-methyltransferase EEF2KMT.